A 361-amino-acid polypeptide reads, in one-letter code: POU domain, class 3, transcription factor 4 (361 aa).

Disordered stretches follow at residues 99-131 (PHVA…GQPL) and 144-192 (MLEH…PTSD). Residues 122 to 131 (PSITSSGQPL) show a composition bias toward polar residues. A compositionally biased stretch (basic and acidic residues) spans 165–183 (VLREPPDHGELGSHHCQDH). The region spanning 186–260 (EETPTSDELE…LLNKWLEEAD (75 aa)) is the POU-specific domain. A Phosphoserine modification is found at Ser-265. The segment at residues 278–337 (KRKKRTSIEVSVKGVLETHFLKCPKPAAQEISSLADSLQLEKEVVRVWFCNRRQKEKRMT) is a DNA-binding region (homeobox).

Belongs to the POU transcription factor family. Class-3 subfamily. Interacts with HNRNPU. Brain specific.

It is found in the nucleus. Functionally, probable transcription factor which exert its primary action widely during early neural development and in a very limited set of neurons in the mature brain. The chain is POU domain, class 3, transcription factor 4 (POU3F4) from Homo sapiens (Human).